A 403-amino-acid chain; its full sequence is Dual-specificity RNA methyltransferase RlmN (403 aa).

E126 (proton acceptor) is an active-site residue. The 244-residue stretch at 132-375 (ETDRGTLCVS…VRTPRGRDIL (244 aa)) folds into the Radical SAM core domain. C139 and C378 form a disulfide bridge. 3 residues coordinate [4Fe-4S] cluster: C146, C150, and C153. S-adenosyl-L-methionine contacts are provided by residues 204-205 (GE), S236, 258-260 (SLH), and N335. The active-site S-methylcysteine intermediate is C378.

It belongs to the radical SAM superfamily. RlmN family. [4Fe-4S] cluster is required as a cofactor.

The protein localises to the cytoplasm. The enzyme catalyses adenosine(2503) in 23S rRNA + 2 reduced [2Fe-2S]-[ferredoxin] + 2 S-adenosyl-L-methionine = 2-methyladenosine(2503) in 23S rRNA + 5'-deoxyadenosine + L-methionine + 2 oxidized [2Fe-2S]-[ferredoxin] + S-adenosyl-L-homocysteine. It carries out the reaction adenosine(37) in tRNA + 2 reduced [2Fe-2S]-[ferredoxin] + 2 S-adenosyl-L-methionine = 2-methyladenosine(37) in tRNA + 5'-deoxyadenosine + L-methionine + 2 oxidized [2Fe-2S]-[ferredoxin] + S-adenosyl-L-homocysteine. Specifically methylates position 2 of adenine 2503 in 23S rRNA and position 2 of adenine 37 in tRNAs. m2A2503 modification seems to play a crucial role in the proofreading step occurring at the peptidyl transferase center and thus would serve to optimize ribosomal fidelity. The protein is Dual-specificity RNA methyltransferase RlmN of Bradyrhizobium sp. (strain ORS 278).